The chain runs to 89 residues: Small ribosomal subunit protein uS17 (89 aa).

This sequence belongs to the universal ribosomal protein uS17 family. In terms of assembly, part of the 30S ribosomal subunit.

Functionally, one of the primary rRNA binding proteins, it binds specifically to the 5'-end of 16S ribosomal RNA. In Acidovorax ebreus (strain TPSY) (Diaphorobacter sp. (strain TPSY)), this protein is Small ribosomal subunit protein uS17.